We begin with the raw amino-acid sequence, 132 residues long: Small ribosomal subunit protein uS11 (132 aa).

The protein belongs to the universal ribosomal protein uS11 family. Part of the 30S ribosomal subunit. Interacts with proteins S7 and S18. Binds to IF-3.

Functionally, located on the platform of the 30S subunit, it bridges several disparate RNA helices of the 16S rRNA. Forms part of the Shine-Dalgarno cleft in the 70S ribosome. The polypeptide is Small ribosomal subunit protein uS11 (Chlamydia abortus (strain DSM 27085 / S26/3) (Chlamydophila abortus)).